The chain runs to 233 residues: NADP-dependent glyceraldehyde-3-phosphate dehydrogenase (233 aa).

7-8 (NY) is a binding site for substrate. 2 residues coordinate NADP(+): lysine 30 and serine 33. 83–87 (GGDTG) provides a ligand contact to NAD(+). Glutamate 102 serves as the catalytic Proton acceptor. Substrate is bound at residue 135–137 (RCT). Cysteine 136 (nucleophile) is an active-site residue. The NADP(+) site is built by glutamate 180 and glutamate 229.

Belongs to the aldehyde dehydrogenase family.

It is found in the cytoplasm. It catalyses the reaction D-glyceraldehyde 3-phosphate + NADP(+) + H2O = (2R)-3-phosphoglycerate + NADPH + 2 H(+). Functionally, important as a means of generating NADPH for biosynthetic reactions. In Scenedesmus vacuolatus (Green alga), this protein is NADP-dependent glyceraldehyde-3-phosphate dehydrogenase (GapN).